Reading from the N-terminus, the 242-residue chain is Uridylate kinase (242 aa).

11–14 (KLSG) lines the ATP pocket. Positions 19-24 (GNMGYG) are involved in allosteric activation by GTP. Glycine 53 provides a ligand contact to UMP. Residues glycine 54 and arginine 58 each contribute to the ATP site. UMP is bound by residues aspartate 73 and 134 to 141 (SGNPFFTT). ATP contacts are provided by threonine 161, tyrosine 167, and aspartate 170.

Belongs to the UMP kinase family. As to quaternary structure, homohexamer.

It is found in the cytoplasm. The enzyme catalyses UMP + ATP = UDP + ADP. Its pathway is pyrimidine metabolism; CTP biosynthesis via de novo pathway; UDP from UMP (UMPK route): step 1/1. With respect to regulation, allosterically activated by GTP. Inhibited by UTP. Its function is as follows. Catalyzes the reversible phosphorylation of UMP to UDP. The chain is Uridylate kinase from Nostoc sp. (strain PCC 7120 / SAG 25.82 / UTEX 2576).